Here is a 447-residue protein sequence, read N- to C-terminus: Folate synthesis bifunctional protein (447 aa).

The tract at residues 1-165 (MTTAQFICLS…SFGEIAHLLP (165 aa)) is HPPK. In terms of domain architecture, Pterin-binding spans 179–438 (TLLMGVVNVT…DVEANQRVLS (260 aa)). The tract at residues 181-447 (LMGVVNVTDN…SAAAWSGVHV (267 aa)) is DHPS. Asparagine 186 is a Mg(2+) binding site. Residues threonine 226, aspartate 266, asparagine 286, aspartate 356, lysine 392, and 426-428 (RVH) each bind (7,8-dihydropterin-6-yl)methyl diphosphate.

This sequence in the C-terminal section; belongs to the DHPS family. It in the N-terminal section; belongs to the HPPK family. Mg(2+) is required as a cofactor.

The catalysed reaction is 6-hydroxymethyl-7,8-dihydropterin + ATP = (7,8-dihydropterin-6-yl)methyl diphosphate + AMP + H(+). The enzyme catalyses (7,8-dihydropterin-6-yl)methyl diphosphate + 4-aminobenzoate = 7,8-dihydropteroate + diphosphate. The protein operates within cofactor biosynthesis; tetrahydrofolate biosynthesis; 2-amino-4-hydroxy-6-hydroxymethyl-7,8-dihydropteridine diphosphate from 7,8-dihydroneopterin triphosphate: step 4/4. It participates in cofactor biosynthesis; tetrahydrofolate biosynthesis; 7,8-dihydrofolate from 2-amino-4-hydroxy-6-hydroxymethyl-7,8-dihydropteridine diphosphate and 4-aminobenzoate: step 1/2. This is Folate synthesis bifunctional protein (folKP) from Chlamydia caviae (strain ATCC VR-813 / DSM 19441 / 03DC25 / GPIC) (Chlamydophila caviae).